Here is a 1413-residue protein sequence, read N- to C-terminus: Sushi, nidogen and EGF-like domain-containing protein 1 (1413 aa).

The first 24 residues, 1-24 (MRHGVAWALLVAAALGLGARGVRG), serve as a signal peptide directing secretion. The NIDO domain occupies 103–258 (AFWADVDNRR…GRWAFRIDDA (156 aa)). Residues asparagine 145 and asparagine 204 are each glycosylated (N-linked (GlcNAc...) asparagine). 3 EGF-like domains span residues 268–309 (TTSV…RRCH), 311–347 (DVNE…PTCE), and 349–385 (AQSP…AACE). 18 disulfide bridges follow: cysteine 272–cysteine 284, cysteine 278–cysteine 297, cysteine 299–cysteine 308, cysteine 315–cysteine 326, cysteine 320–cysteine 335, cysteine 337–cysteine 346, cysteine 353–cysteine 364, cysteine 358–cysteine 373, cysteine 375–cysteine 384, cysteine 391–cysteine 402, cysteine 396–cysteine 411, cysteine 413–cysteine 422, cysteine 433–cysteine 444, cysteine 438–cysteine 453, cysteine 455–cysteine 464, cysteine 472–cysteine 480, cysteine 474–cysteine 488, and cysteine 490–cysteine 499. Asparagine 292 carries an N-linked (GlcNAc...) asparagine glycan. Residues 352–374 (PCDTKECQHGGQCQVENGSAVCV) enclose the Follistatin-like 1 domain. N-linked (GlcNAc...) asparagine glycosylation occurs at asparagine 368. The 37-residue stretch at 387–423 (DVDDCSPDPCLNGGSCVDLVGNYTCLCAEPFKGLRCE) folds into the EGF-like 4; calcium-binding domain. The N-linked (GlcNAc...) asparagine glycan is linked to asparagine 408. 2 consecutive EGF-like domains span residues 429–465 (VPDA…LDCR) and 468–500 (VPDD…LLCE). An N-linked (GlcNAc...) asparagine glycan is attached at asparagine 484. One can recognise a Follistatin-like 2 domain in the interval 507-530 (PCNMNTQCPDGGYCMEHGGSYLCV). Asparagine 536 carries an N-linked (GlcNAc...) asparagine glycan. EGF-like domains lie at 541–577 (LPSP…KHCE), 580–616 (RPHL…RHCE), 619–655 (KPDS…RHCE), and 657–693 (APSP…RRCQ). Intrachain disulfides connect cysteine 545–cysteine 556, cysteine 550–cysteine 565, cysteine 567–cysteine 576, cysteine 584–cysteine 595, cysteine 589–cysteine 604, cysteine 606–cysteine 615, cysteine 623–cysteine 634, cysteine 628–cysteine 643, cysteine 645–cysteine 654, cysteine 661–cysteine 672, cysteine 666–cysteine 681, cysteine 683–cysteine 692, cysteine 698–cysteine 739, cysteine 724–cysteine 751, cysteine 757–cysteine 768, cysteine 762–cysteine 777, cysteine 779–cysteine 788, cysteine 795–cysteine 806, cysteine 800–cysteine 815, cysteine 817–cysteine 826, cysteine 833–cysteine 844, cysteine 838–cysteine 853, cysteine 855–cysteine 864, cysteine 871–cysteine 882, cysteine 876–cysteine 891, and cysteine 893–cysteine 902. The Sushi domain occupies 696–753 (VDCGPPEEVKHATLRFNGTRLGAVALYACDRGYSLSAPSRIRVCQPHGVWSEPPQCLE). N-linked (GlcNAc...) asparagine glycosylation is present at asparagine 712. The EGF-like 11; calcium-binding domain maps to 753-789 (EIDECRSQPCLHGGSCQDRVAGYLCLCSTGYEGAHCE). The region spanning 791–827 (ERDECRAHPCRNGGSCRNLPGAYVCRCPAGFVGVHCE) is the EGF-like 12; calcium-binding domain. EGF-like domains lie at 829 to 865 (EVDA…YHCE) and 867 to 903 (VSDP…EDCA). N-linked (GlcNAc...) asparagine glycosylation is present at asparagine 886. 3 Fibronectin type-III domains span residues 908 to 1006 (PPTA…TRPR), 1007 to 1105 (PVEG…TRPL), and 1106 to 1200 (PPAN…SPRD). N-linked (GlcNAc...) asparagine glycosylation is found at asparagine 977, asparagine 1015, asparagine 1109, and asparagine 1139. The interval 1206 to 1226 (WHQGGHHPRVLKNRPPPARLP) is disordered. The segment covering 1207–1217 (HQGGHHPRVLK) has biased composition (basic residues). The region spanning 1307 to 1343 (VPGNCSENPCQNGGTCVPGADAHSCDCGPGFKGRRCE) is the EGF-like 15 domain. Residue asparagine 1310 is glycosylated (N-linked (GlcNAc...) asparagine). 3 disulfide bridges follow: cysteine 1311–cysteine 1322, cysteine 1316–cysteine 1331, and cysteine 1333–cysteine 1342. The interval 1394–1413 (TSLKKTPNRKQSKSQTLEKS) is disordered.

Phosphorylated on serine and threonine residues. In terms of processing, N-glycosylated.

It is found in the secreted. It localises to the extracellular space. The protein localises to the extracellular matrix. This is Sushi, nidogen and EGF-like domain-containing protein 1 from Homo sapiens (Human).